Reading from the N-terminus, the 231-residue chain is Orotidine 5'-phosphate decarboxylase (231 aa).

Substrate contacts are provided by residues aspartate 11, lysine 33, aspartate 60–threonine 69, threonine 120, arginine 181, glutamine 190, glycine 210, and arginine 211. The active-site Proton donor is lysine 62.

The protein belongs to the OMP decarboxylase family. Type 1 subfamily. As to quaternary structure, homodimer.

It catalyses the reaction orotidine 5'-phosphate + H(+) = UMP + CO2. It participates in pyrimidine metabolism; UMP biosynthesis via de novo pathway; UMP from orotate: step 2/2. Catalyzes the decarboxylation of orotidine 5'-monophosphate (OMP) to uridine 5'-monophosphate (UMP). The protein is Orotidine 5'-phosphate decarboxylase of Photobacterium profundum (strain SS9).